The primary structure comprises 626 residues: Glycosyltransferase 25 family member (626 aa).

A signal peptide spans 1–21 (MLKKQVFYGILLICAFVCIYG). 4 N-linked (GlcNAc...) asparagine glycosylation sites follow: asparagine 113, asparagine 234, asparagine 272, and asparagine 533. The Prevents secretion from ER signature appears at 623–626 (HQEL).

This sequence belongs to the glycosyltransferase 25 family.

The protein resides in the endoplasmic reticulum lumen. This Drosophila pseudoobscura pseudoobscura (Fruit fly) protein is Glycosyltransferase 25 family member.